Reading from the N-terminus, the 632-residue chain is ATP-dependent DNA helicase RecQ (632 aa).

The region spanning I47–H215 is the Helicase ATP-binding domain. ATP is bound at residue M60–S67. A DEAH box motif is present at residues D159–H162. One can recognise a Helicase C-terminal domain in the interval P236–G385. Residues C393, C410, C413, and C416 each contribute to the Zn(2+) site. Positions A544–H624 constitute an HRDC domain.

Belongs to the helicase family. RecQ subfamily. It depends on Mg(2+) as a cofactor. Zn(2+) serves as cofactor.

The catalysed reaction is Couples ATP hydrolysis with the unwinding of duplex DNA by translocating in the 3'-5' direction.. The enzyme catalyses ATP + H2O = ADP + phosphate + H(+). Its function is as follows. An ATP-dependent DNA helicase which unwinds DNA in a 3'-5' direction. Plays a role in recombination. The sequence is that of ATP-dependent DNA helicase RecQ from Pasteurella multocida (strain Pm70).